The following is a 199-amino-acid chain: Shikimate kinase (199 aa).

12–17 (GAGKST) is a binding site for ATP. A Mg(2+)-binding site is contributed by serine 16. Substrate contacts are provided by aspartate 34, arginine 58, and glycine 80. Residue arginine 117 coordinates ATP. Residue arginine 136 participates in substrate binding. The interval 174–199 (VSGGDRKSSEAERSGAPLRKSSEVVK) is disordered. The span at 177–186 (GDRKSSEAER) shows a compositional bias: basic and acidic residues.

The protein belongs to the shikimate kinase family. In terms of assembly, monomer. Requires Mg(2+) as cofactor.

It localises to the cytoplasm. It carries out the reaction shikimate + ATP = 3-phosphoshikimate + ADP + H(+). Its pathway is metabolic intermediate biosynthesis; chorismate biosynthesis; chorismate from D-erythrose 4-phosphate and phosphoenolpyruvate: step 5/7. In terms of biological role, catalyzes the specific phosphorylation of the 3-hydroxyl group of shikimic acid using ATP as a cosubstrate. The protein is Shikimate kinase of Mycobacterium leprae (strain TN).